Consider the following 197-residue polypeptide: Imidazoleglycerol-phosphate dehydratase (197 aa).

The protein belongs to the imidazoleglycerol-phosphate dehydratase family.

Its subcellular location is the cytoplasm. It catalyses the reaction D-erythro-1-(imidazol-4-yl)glycerol 3-phosphate = 3-(imidazol-4-yl)-2-oxopropyl phosphate + H2O. Its pathway is amino-acid biosynthesis; L-histidine biosynthesis; L-histidine from 5-phospho-alpha-D-ribose 1-diphosphate: step 6/9. The polypeptide is Imidazoleglycerol-phosphate dehydratase (Rhodopseudomonas palustris (strain ATCC BAA-98 / CGA009)).